A 155-amino-acid chain; its full sequence is DNA gyrase inhibitor (155 aa).

The protein belongs to the DNA gyrase inhibitor family. Interacts with DNA gyrase.

It is found in the cytoplasm. Functionally, inhibits the supercoiling activity of DNA gyrase. Acts by inhibiting DNA gyrase at an early step, prior to (or at the step of) binding of DNA by the gyrase. It protects cells against toxins that target DNA gyrase, by inhibiting activity of these toxins and reducing the formation of lethal double-strand breaks in the cell. The polypeptide is DNA gyrase inhibitor (Salmonella arizonae (strain ATCC BAA-731 / CDC346-86 / RSK2980)).